The chain runs to 150 residues: Large ribosomal subunit protein bL9 (150 aa).

Belongs to the bacterial ribosomal protein bL9 family.

Binds to the 23S rRNA. The protein is Large ribosomal subunit protein bL9 of Shewanella pealeana (strain ATCC 700345 / ANG-SQ1).